The sequence spans 606 residues: Probable methyltransferase PMT5 (606 aa).

The Cytoplasmic segment spans residues 1-20; it reads MRGSWYKSVSSVFGLRPRIR. The helical; Signal-anchor for type II membrane protein transmembrane segment at 21 to 41 threads the bilayer; it reads GLLFFIVGVVALVTILAPLTS. The Lumenal portion of the chain corresponds to 42–606; that stretch reads NSYDSSSSST…LVCQKPFIKK (565 aa). N101 and N409 each carry an N-linked (GlcNAc...) asparagine glycan.

Belongs to the methyltransferase superfamily.

The protein resides in the endoplasmic reticulum membrane. The polypeptide is Probable methyltransferase PMT5 (Arabidopsis thaliana (Mouse-ear cress)).